Here is an 86-residue protein sequence, read N- to C-terminus: Large ribosomal subunit protein bL31 (86 aa).

Positions 65-86 (YGMGSADSATSKETKESKKSDK) are disordered. The segment covering 74–86 (TSKETKESKKSDK) has biased composition (basic and acidic residues).

This sequence belongs to the bacterial ribosomal protein bL31 family. Type A subfamily. In terms of assembly, part of the 50S ribosomal subunit.

Its function is as follows. Binds the 23S rRNA. The polypeptide is Large ribosomal subunit protein bL31 (Prochlorococcus marinus subsp. pastoris (strain CCMP1986 / NIES-2087 / MED4)).